Consider the following 110-residue polypeptide: MSLEKTTRMNYLFDFYQSLLTSKQKSYMSLYYLDDFSLGEIAEEYDVSRQAVYDNIKRTEAMLEQYEEKLLLFKKFQERKEMFTKLKELASGLQEEEKMTALIEALEKLD.

The protein belongs to the UPF0122 family.

In terms of biological role, might take part in the signal recognition particle (SRP) pathway. This is inferred from the conservation of its genetic proximity to ftsY/ffh. May be a regulatory protein. In Bacillus velezensis (strain DSM 23117 / BGSC 10A6 / LMG 26770 / FZB42) (Bacillus amyloliquefaciens subsp. plantarum), this protein is UPF0122 protein RBAM_015800.